A 115-amino-acid chain; its full sequence is Nucleoid-associated protein LBL_0065 (115 aa).

This sequence belongs to the YbaB/EbfC family. Homodimer.

The protein resides in the cytoplasm. The protein localises to the nucleoid. In terms of biological role, binds to DNA and alters its conformation. May be involved in regulation of gene expression, nucleoid organization and DNA protection. The sequence is that of Nucleoid-associated protein LBL_0065 from Leptospira borgpetersenii serovar Hardjo-bovis (strain L550).